Here is a 553-residue protein sequence, read N- to C-terminus: Putative transport protein YidE (553 aa).

The next 5 membrane-spanning stretches (helical) occupy residues 4–24, 28–48, 65–85, 95–115, and 158–178; these read IALTVSVLALVAVVGLWIGNI, GVGFGIGGVLFGGIIVGHFVD, FGLILFVYTIGIQVGPGFFAS, LFAVLIVIMGGLVTAILHKIF, and MSYAMAYPFGICGILLTMWLM. RCK C-terminal domains follow at residues 192 to 276 and 279 to 361; these read KHES…VIGK and DTSL…VVGN. 6 helical membrane-spanning segments follow: residues 371–391, 393–413, 437–457, 464–484, 493–513, and 533–553; these read MLPVFIGIGLGVLLGSIPLFV, GFPVALKLGLAGGPLIMALIL, LGIVLFLAVVGLKSGGDFVDT, LSWIGYGIFITAIPLITIGLL, YLTLCGMLAGSMTDPPALAFA, and LVMFLRIITPQLLAVIFWGMG.

The protein belongs to the AAE transporter (TC 2.A.81) family. YidE subfamily.

It localises to the cell membrane. In Salmonella paratyphi C (strain RKS4594), this protein is Putative transport protein YidE.